The sequence spans 358 residues: Electron transfer flavoprotein subunit alpha, mitochondrial (358 aa).

An FAD-binding site is contributed by 298-326 (LYMAFGVSGAIQHLAGMRDSKVIVAVNKD).

The protein belongs to the ETF alpha-subunit/FixB family. In terms of assembly, heterodimer of an alpha and a beta subunit. The cofactor is FAD.

It is found in the mitochondrion matrix. The electron transfer flavoprotein serves as a specific electron acceptor for several dehydrogenases, including five acyl-CoA dehydrogenases, glutaryl-CoA and sarcosine dehydrogenase. It transfers the electrons to the main mitochondrial respiratory chain via ETF-ubiquinone oxidoreductase (ETF dehydrogenase). The protein is Electron transfer flavoprotein subunit alpha, mitochondrial (ETFA) of Oryza sativa subsp. indica (Rice).